Reading from the N-terminus, the 882-residue chain is Alanine--tRNA ligase (882 aa).

Residues H570, H574, C672, and H676 each contribute to the Zn(2+) site.

Belongs to the class-II aminoacyl-tRNA synthetase family. It depends on Zn(2+) as a cofactor.

The protein localises to the cytoplasm. It catalyses the reaction tRNA(Ala) + L-alanine + ATP = L-alanyl-tRNA(Ala) + AMP + diphosphate. Catalyzes the attachment of alanine to tRNA(Ala) in a two-step reaction: alanine is first activated by ATP to form Ala-AMP and then transferred to the acceptor end of tRNA(Ala). Also edits incorrectly charged Ser-tRNA(Ala) and Gly-tRNA(Ala) via its editing domain. The polypeptide is Alanine--tRNA ligase (Xanthomonas oryzae pv. oryzae (strain MAFF 311018)).